The chain runs to 513 residues: uncharacterized protein (513 aa).

Positions 1–48 are disordered; the sequence is MGSSEEQSVPGDDFYEESGDLNTGLSLVLRPAKSNEGESSLSSPKGSK. Polar residues predominate over residues 37 to 48; the sequence is GESSLSSPKGSK. 3 positions are modified to phosphoserine: serine 43, serine 84, and serine 123. Disordered stretches follow at residues 210-229, 236-287, 390-414, and 453-481; these read DGNH…GDLA, TRDS…GSKS, AKED…AEPP, and SVLS…TQGC.

This is an uncharacterized protein from Mus musculus (Mouse).